The following is a 201-amino-acid chain: UPF0301 protein RER_60040 (201 aa).

It belongs to the UPF0301 (AlgH) family.

The polypeptide is UPF0301 protein RER_60040 (Rhodococcus erythropolis (strain PR4 / NBRC 100887)).